The following is a 275-amino-acid chain: Large ribosomal subunit protein uL2 (275 aa).

Disordered regions lie at residues 28-54 and 223-275; these read APHA…TRHI and VAMN…RNKK.

This sequence belongs to the universal ribosomal protein uL2 family. In terms of assembly, part of the 50S ribosomal subunit. Forms a bridge to the 30S subunit in the 70S ribosome.

One of the primary rRNA binding proteins. Required for association of the 30S and 50S subunits to form the 70S ribosome, for tRNA binding and peptide bond formation. It has been suggested to have peptidyltransferase activity; this is somewhat controversial. Makes several contacts with the 16S rRNA in the 70S ribosome. In Saccharophagus degradans (strain 2-40 / ATCC 43961 / DSM 17024), this protein is Large ribosomal subunit protein uL2.